The primary structure comprises 213 residues: Putative 3-methyladenine DNA glycosylase (213 aa).

It belongs to the DNA glycosylase MPG family.

The sequence is that of Putative 3-methyladenine DNA glycosylase from Latilactobacillus sakei subsp. sakei (strain 23K) (Lactobacillus sakei subsp. sakei).